A 149-amino-acid polypeptide reads, in one-letter code: Placenta growth factor (149 aa).

Positions 1–18 are cleaved as a signal peptide; that stretch reads MPTVRLFTCFLQLLTGLV. Asparagine 33 carries an N-linked (GlcNAc...) asparagine glycan. 3 disulfides stabilise this stretch: cysteine 52/cysteine 94, cysteine 83/cysteine 128, and cysteine 87/cysteine 130. A glycan (N-linked (GlcNAc...) asparagine) is linked at asparagine 101.

Belongs to the PDGF/VEGF growth factor family. Antiparallel homodimer; disulfide-linked. Also found as heterodimer with VEGFA/VEGF.

It is found in the secreted. Growth factor active in angiogenesis and endothelial cell growth, stimulating their proliferation and migration. It binds to the receptor FLT1/VEGFR-1. Also promotes cell tumor growth. The protein is Placenta growth factor (PGF) of Bos taurus (Bovine).